The primary structure comprises 237 residues: MEHKAPLVEFLGLTFNLSDMLMITITCLIVFIIAVAATRSLQLRPTGMQNFMEWVFDFVRGIINSTMDWQTGGRFLTLGVTLIMYVFVANMLGLPFWLDVTVNFGGNRRPTDATVTLTLRDGRRPHHYYGVKMKGASDYLRDYTRPVAWLFPLKIIEEFANTLTLGLRLFGNIYAGEILLGLLASLGTHYGVLGCGSIPMMVIMVWQAFSIFVGTIQAFIFTMLTSFYMAHKISHDH.

4 helical membrane passes run 17-37 (LSDM…AVAA), 78-98 (LGVT…PFWL), 178-198 (ILLG…CGSI), and 201-221 (MVIM…AFIF).

It belongs to the ATPase A chain family. F-type ATPases have 2 components, CF(1) - the catalytic core - and CF(0) - the membrane proton channel. CF(1) has five subunits: alpha(3), beta(3), gamma(1), delta(1), epsilon(1). CF(0) has three main subunits: a(1), b(2) and c(9-12). The alpha and beta chains form an alternating ring which encloses part of the gamma chain. CF(1) is attached to CF(0) by a central stalk formed by the gamma and epsilon chains, while a peripheral stalk is formed by the delta and b chains.

It is found in the cell membrane. In terms of biological role, key component of the proton channel; it plays a direct role in the translocation of protons across the membrane. In Bacillus caldotenax, this protein is ATP synthase subunit a.